We begin with the raw amino-acid sequence, 966 residues long: Serine/threonine-protein phosphatase 6 regulatory subunit 2 (966 aa).

A Phosphoserine modification is found at Ser-289. Basic and acidic residues-rich tracts occupy residues 408–424 and 669–687; these read TEASGSESRVEPPHENG and GPERGGQDGKASLEAHRDA. 2 disordered regions span residues 408 to 436 and 657 to 707; these read TEASGSESRVEPPHENGNRSLETPQPAAS and GAPH…VEGD. Phosphoserine occurs at positions 771 and 828. The interval 819 to 856 is disordered; sequence ASDSSSSGGSHSEDGDQKAASAMDAVSRGPGREAPPLP.

The protein belongs to the SAPS family. Protein phosphatase 6 (PP6) holoenzyme is proposed to be a heterotrimeric complex formed by the catalytic subunit, a SAPS domain-containing subunit (PP6R) and an ankyrin repeat-domain containing regulatory subunit (ARS). Interacts with PPP6C and NFKBIE. Interacts with ANKRD28. Ubiquitously expressed with strongest expression in the testis followed by liver, heart, kidney, brain and placenta.

Its subcellular location is the cytoplasm. Functionally, regulatory subunit of protein phosphatase 6 (PP6). May function as a scaffolding PP6 subunit. Involved in the PP6-mediated dephosphorylation of NFKBIE opposing its degradation in response to TNF-alpha. The chain is Serine/threonine-protein phosphatase 6 regulatory subunit 2 (PPP6R2) from Homo sapiens (Human).